The following is a 276-amino-acid chain: Transmembrane protein 45B (276 aa).

The next 6 helical transmembrane spans lie at 7-27 (HALP…KYPL), 48-68 (IIEA…EQFV), 95-115 (LFFA…HVPL), 147-167 (IHSL…VEVV), 181-201 (LLLL…PPFG), and 213-233 (IMFV…ILAA). Phosphoserine occurs at positions 271 and 273.

Belongs to the TMEM45 family.

Its subcellular location is the endosome membrane. It localises to the lysosome membrane. The protein resides in the golgi apparatus. It is found in the trans-Golgi network membrane. Functionally, plays a role in innate immunity. The polypeptide is Transmembrane protein 45B (TMEM45B) (Bos taurus (Bovine)).